The primary structure comprises 338 residues: RNA 3'-terminal phosphate cyclase (338 aa).

Residues Gln103 and 283-287 (YLADQ) contribute to the ATP site. The active-site Tele-AMP-histidine intermediate is the His308.

This sequence belongs to the RNA 3'-terminal cyclase family. Type 1 subfamily.

The protein localises to the cytoplasm. The enzyme catalyses a 3'-end 3'-phospho-ribonucleotide-RNA + ATP = a 3'-end 2',3'-cyclophospho-ribonucleotide-RNA + AMP + diphosphate. Functionally, catalyzes the conversion of 3'-phosphate to a 2',3'-cyclic phosphodiester at the end of RNA. The mechanism of action of the enzyme occurs in 3 steps: (A) adenylation of the enzyme by ATP; (B) transfer of adenylate to an RNA-N3'P to produce RNA-N3'PP5'A; (C) and attack of the adjacent 2'-hydroxyl on the 3'-phosphorus in the diester linkage to produce the cyclic end product. The biological role of this enzyme is unknown but it is likely to function in some aspects of cellular RNA processing. This chain is RNA 3'-terminal phosphate cyclase, found in Escherichia coli O9:H4 (strain HS).